A 419-amino-acid polypeptide reads, in one-letter code: Argininosuccinate synthase (419 aa).

Position 9–17 (9–17 (AYSGGLDTS)) interacts with ATP. Residue Tyr87 participates in L-citrulline binding. Gly117 is a binding site for ATP. L-aspartate contacts are provided by Thr119, Asn123, and Asp124. Asn123 contributes to the L-citrulline binding site. Arg127, Ser175, Ser184, Glu260, and Tyr272 together coordinate L-citrulline.

It belongs to the argininosuccinate synthase family. Type 1 subfamily. Homotetramer.

It localises to the cytoplasm. The catalysed reaction is L-citrulline + L-aspartate + ATP = 2-(N(omega)-L-arginino)succinate + AMP + diphosphate + H(+). Its pathway is amino-acid biosynthesis; L-arginine biosynthesis; L-arginine from L-ornithine and carbamoyl phosphate: step 2/3. This chain is Argininosuccinate synthase, found in Brevibacillus brevis (strain 47 / JCM 6285 / NBRC 100599).